The sequence spans 154 residues: Cytochrome c' (154 aa).

The signal sequence occupies residues 1-23 (MKHVLASTAAGLMALGLASSAIA). 6 residues coordinate heme c: R35, Q36, R95, C144, C147, and H148.

In terms of assembly, homodimer. In terms of processing, binds 1 heme c group covalently per subunit.

Functionally, cytochrome c' is the most widely occurring bacterial c-type cytochrome. Cytochromes c' are high-spin proteins and the heme has no sixth ligand. Their exact function is not known. In Allochromatium vinosum (strain ATCC 17899 / DSM 180 / NBRC 103801 / NCIMB 10441 / D) (Chromatium vinosum), this protein is Cytochrome c' (cycA).